The following is a 234-amino-acid chain: Ribonuclease HII (234 aa).

The RNase H type-2 domain occupies 16-207 (ALVAGVDEAG…VRRMLTPKAI (192 aa)). A divalent metal cation is bound by residues Asp-22, Glu-23, and Asp-115.

It belongs to the RNase HII family. The cofactor is Mn(2+). Requires Mg(2+) as cofactor.

The protein localises to the cytoplasm. The enzyme catalyses Endonucleolytic cleavage to 5'-phosphomonoester.. Its function is as follows. Endonuclease that specifically degrades the RNA of RNA-DNA hybrids. In Xylella fastidiosa (strain M12), this protein is Ribonuclease HII.